A 480-amino-acid polypeptide reads, in one-letter code: Argininosuccinate lyase (480 aa).

Residues 1–20 are disordered; that stretch reads MTQQDGGQAGQAEPTKLWGG.

Belongs to the lyase 1 family. Argininosuccinate lyase subfamily.

The protein localises to the cytoplasm. It carries out the reaction 2-(N(omega)-L-arginino)succinate = fumarate + L-arginine. Its pathway is amino-acid biosynthesis; L-arginine biosynthesis; L-arginine from L-ornithine and carbamoyl phosphate: step 3/3. The sequence is that of Argininosuccinate lyase from Saccharopolyspora erythraea (strain ATCC 11635 / DSM 40517 / JCM 4748 / NBRC 13426 / NCIMB 8594 / NRRL 2338).